Consider the following 290-residue polypeptide: MAEKQQAVAEFYDNSTGAWEVFFGDHLHDGFYDPGTTATIPASRAAVVRMIDEALRFANVSTDPAKKPRNMLDVGCGIGGTCLYVAKKYDIQCTGITISPEQVKCAQGFAAAQGLENKATFDCGDALNMPYKDGTFDVVFTIQCIEHIQDKEKFIREMVRVAAPGAAIVIVSYGHRNLSPGEESLKPEEKKTLKKICDNIVLSWLCSSADYVRWLTPLPVQDIKTADWTQNIQPFYPLLFKEAFTWRGFTSLLMKGGWSAIKVVLAVKVMAKAADDGLLKFMAVTCKKSK.

The interval 71 to 80 (MLDVGCGIGG) is SAM motif I. The Vacuolar targeting signal signature appears at 133-139 (DGTFDVV). The SAM motif II stretch occupies residues 134 to 142 (GTFDVVFTI). The tract at residues 161–170 (VAAPGAAIVI) is SAM motif III.

Belongs to the class I-like SAM-binding methyltransferase superfamily. gTMT family. In terms of assembly, homodimer.

It localises to the vacuole membrane. The catalysed reaction is picrinine + S-adenosyl-L-methionine = ervincine + S-adenosyl-L-homocysteine + H(+). The protein operates within alkaloid biosynthesis; vindoline biosynthesis. Functionally, S-adenosyl-L-methionine-dependent N-methyltransferase involved in the biosynthesis of biologically active monoterpenoid indole alkaloids (MIAs) natural products including vindoline. Catalyzes the conversion of picrinine to N-methylpicrinine (ervincine). The sequence is that of Picrinine-N-methytransferase TMT4 from Catharanthus roseus (Madagascar periwinkle).